The primary structure comprises 526 residues: Peptide chain release factor 3 (526 aa).

Residues 11–277 (SKRRTFAIIS…SLIKWAPSPL (267 aa)) enclose the tr-type G domain. GTP contacts are provided by residues 20 to 27 (SHPDAGKT), 88 to 92 (DTPGH), and 142 to 145 (NKLD).

It belongs to the TRAFAC class translation factor GTPase superfamily. Classic translation factor GTPase family. PrfC subfamily.

Its subcellular location is the cytoplasm. Its function is as follows. Increases the formation of ribosomal termination complexes and stimulates activities of RF-1 and RF-2. It binds guanine nucleotides and has strong preference for UGA stop codons. It may interact directly with the ribosome. The stimulation of RF-1 and RF-2 is significantly reduced by GTP and GDP, but not by GMP. The polypeptide is Peptide chain release factor 3 (Buchnera aphidicola subsp. Acyrthosiphon pisum (strain Tuc7)).